The following is a 468-amino-acid chain: Kynureninase 2 (468 aa).

Pyridoxal 5'-phosphate contacts are provided by residues Leu134, Thr135, 162 to 165 (FPSD), Asp247, His250, and Tyr272. The residue at position 273 (Lys273) is an N6-(pyridoxal phosphate)lysine. 2 residues coordinate pyridoxal 5'-phosphate: Trp312 and Asn340.

The protein belongs to the kynureninase family. Homodimer. The cofactor is pyridoxal 5'-phosphate.

It is found in the cytoplasm. The enzyme catalyses L-kynurenine + H2O = anthranilate + L-alanine + H(+). It catalyses the reaction 3-hydroxy-L-kynurenine + H2O = 3-hydroxyanthranilate + L-alanine + H(+). The protein operates within amino-acid degradation; L-kynurenine degradation; L-alanine and anthranilate from L-kynurenine: step 1/1. Its pathway is cofactor biosynthesis; NAD(+) biosynthesis; quinolinate from L-kynurenine: step 2/3. Functionally, catalyzes the cleavage of L-kynurenine (L-Kyn) and L-3-hydroxykynurenine (L-3OHKyn) into anthranilic acid (AA) and 3-hydroxyanthranilic acid (3-OHAA), respectively. The protein is Kynureninase 2 (bna5-2) of Aspergillus oryzae (strain ATCC 42149 / RIB 40) (Yellow koji mold).